Here is a 274-residue protein sequence, read N- to C-terminus: Rhamnulose-1-phosphate aldolase (274 aa).

Glutamate 117 is a catalytic residue. Residues histidine 141, histidine 143, and histidine 212 each contribute to the Zn(2+) site.

It belongs to the aldolase class II family. RhaD subfamily. In terms of assembly, homotetramer. Zn(2+) is required as a cofactor.

It localises to the cytoplasm. The catalysed reaction is L-rhamnulose 1-phosphate = (S)-lactaldehyde + dihydroxyacetone phosphate. It participates in carbohydrate degradation; L-rhamnose degradation; glycerone phosphate from L-rhamnose: step 3/3. Functionally, catalyzes the reversible cleavage of L-rhamnulose-1-phosphate to dihydroxyacetone phosphate (DHAP) and L-lactaldehyde. The polypeptide is Rhamnulose-1-phosphate aldolase (Escherichia coli O157:H7).